Here is a 494-residue protein sequence, read N- to C-terminus: DnaJ-related protein rsp1 (494 aa).

Residues 12–78 (DYYTILGAES…KLRELFDQRR (67 aa)) form the J domain. Residues 229–242 (SEISNGLNSNGVEN) are compositionally biased toward polar residues. The segment at 229-354 (SEISNGLNSN…NDSTSNSTEY (126 aa)) is disordered. Low complexity predominate over residues 243-256 (SSITKSSPRSSSSS). Over residues 270-287 (IFTSPNTPEHPSVYQTDI) the composition is skewed to polar residues. Positions 321–331 (LSRSKSSSLSR) are enriched in low complexity. The segment covering 332–354 (NQTRSQLNDLSAENDSTSNSTEY) has biased composition (polar residues).

As to quaternary structure, interacts iwth ssa1.

The protein resides in the cytoplasm. It localises to the cytoskeleton. Its subcellular location is the nucleus. Its function is as follows. Has a role in the proper organization of the interphase microtubule cytoskeleton. Required for equatorial microtubule organizing center (eMTOC) disassembly into satellites, contributing to the dynamic redistribution of MTOC components for organization of interphase microtubules. This Schizosaccharomyces pombe (strain 972 / ATCC 24843) (Fission yeast) protein is DnaJ-related protein rsp1 (rsp1).